The chain runs to 701 residues: Elongation factor G 2 (701 aa).

Residues 8–290 enclose the tr-type G domain; that stretch reads NRYRNIGIVA…AVIEFLPAPA (283 aa). Residues 17 to 24, 88 to 92, and 142 to 145 contribute to the GTP site; these read AHVDAGKT, DTPGH, and NKMD.

Belongs to the TRAFAC class translation factor GTPase superfamily. Classic translation factor GTPase family. EF-G/EF-2 subfamily.

It is found in the cytoplasm. Functionally, catalyzes the GTP-dependent ribosomal translocation step during translation elongation. During this step, the ribosome changes from the pre-translocational (PRE) to the post-translocational (POST) state as the newly formed A-site-bound peptidyl-tRNA and P-site-bound deacylated tRNA move to the P and E sites, respectively. Catalyzes the coordinated movement of the two tRNA molecules, the mRNA and conformational changes in the ribosome. The protein is Elongation factor G 2 of Pseudoalteromonas atlantica (strain T6c / ATCC BAA-1087).